The following is a 131-amino-acid chain: Small ribosomal subunit protein uS8 (131 aa).

Belongs to the universal ribosomal protein uS8 family. In terms of assembly, part of the 30S ribosomal subunit. Contacts proteins S5 and S12.

Its function is as follows. One of the primary rRNA binding proteins, it binds directly to 16S rRNA central domain where it helps coordinate assembly of the platform of the 30S subunit. The chain is Small ribosomal subunit protein uS8 from Wolinella succinogenes (strain ATCC 29543 / DSM 1740 / CCUG 13145 / JCM 31913 / LMG 7466 / NCTC 11488 / FDC 602W) (Vibrio succinogenes).